A 120-amino-acid polypeptide reads, in one-letter code: Galanin-like peptide (120 aa).

Positions 1–22 are cleaved as a signal peptide; the sequence is MALTVPLIVLAVLLSLMESPAS. Residues 85 to 120 constitute a propeptide that is removed on maturation; sequence SLGETFAKPDSGVTFVGVPDVVPWKRIRPGTTRFQI.

Belongs to the galanin family.

Its subcellular location is the secreted. Hypothalamic neuropeptide which binds to the G-protein-coupled galanin receptors (GALR1, GALR2 and GALR3). Involved in a large number of putative physiological functions in CNS homeostatic processes, including the regulation of gonadotropin-releasing hormone secretion. The protein is Galanin-like peptide (GALP) of Sus scrofa (Pig).